The chain runs to 246 residues: 3-deoxy-manno-octulosonate cytidylyltransferase (246 aa).

The protein belongs to the KdsB family.

The protein resides in the cytoplasm. The catalysed reaction is 3-deoxy-alpha-D-manno-oct-2-ulosonate + CTP = CMP-3-deoxy-beta-D-manno-octulosonate + diphosphate. It participates in nucleotide-sugar biosynthesis; CMP-3-deoxy-D-manno-octulosonate biosynthesis; CMP-3-deoxy-D-manno-octulosonate from 3-deoxy-D-manno-octulosonate and CTP: step 1/1. The protein operates within bacterial outer membrane biogenesis; lipopolysaccharide biosynthesis. Functionally, activates KDO (a required 8-carbon sugar) for incorporation into bacterial lipopolysaccharide in Gram-negative bacteria. In Myxococcus xanthus (strain DK1622), this protein is 3-deoxy-manno-octulosonate cytidylyltransferase.